The sequence spans 239 residues: Serine protease SplC (239 aa).

A signal peptide spans 1 to 36 (MNKNIVIKSMAALAILTSVTGINAAVVEETQQIANA). Active-site charge relay system residues include His-75, Asp-113, and Ser-193.

Belongs to the peptidase S1B family.

It localises to the secreted. The sequence is that of Serine protease SplC (splC) from Staphylococcus aureus.